The following is a 203-amino-acid chain: Large ribosomal subunit protein uL13 (203 aa).

At alanine 2 the chain carries N-acetylalanine. At arginine 59 the chain carries Citrulline. Phosphoserine is present on serine 77. At arginine 140 the chain carries Citrulline. Lysine 191 is subject to N6-acetyllysine.

It belongs to the universal ribosomal protein uL13 family. As to quaternary structure, component of the 60S ribosome. Component of the GAIT complex. Interacts with EIF4G1. Phosphorylation at Ser-77 upon interferon-gamma treatment in macrophages involves a DAPK1-DAPK3 kinase cascade and is causing release from the ribosome, association with the GAIT complex and subsequent involvement in transcript-selective translation inhibition. Post-translationally, citrullinated by PADI4.

It localises to the cytoplasm. Functionally, associated with ribosomes but is not required for canonical ribosome function and has extra-ribosomal functions. Component of the GAIT (gamma interferon-activated inhibitor of translation) complex which mediates interferon-gamma-induced transcript-selective translation inhibition in inflammation processes. Upon interferon-gamma activation and subsequent phosphorylation dissociates from the ribosome and assembles into the GAIT complex which binds to stem loop-containing GAIT elements in the 3'-UTR of diverse inflammatory mRNAs (such as ceruplasmin) and suppresses their translation. In the GAIT complex interacts with m7G cap-bound eIF4G at or near the eIF3-binding site and blocks the recruitment of the 43S ribosomal complex. Involved in methylation of rRNA. This chain is Large ribosomal subunit protein uL13 (RPL13A), found in Canis lupus familiaris (Dog).